Consider the following 490-residue polypeptide: MERWGFNSMLFKKEFERRCGLNKSMGSLGPIENTSEDPNLKVKNIHSCSNVDYLFGVKDIWNFISDDTFLVSDRNGDSYSIYFDIENQIFEVDNDHSFLSELESSFSSYRNSSYLNNGFRGEDPYYNSYMSYMYDTQYSWNNHINSCIDNYLQSQICIDTSIISGGESYGDSYIYRAICSGESLNSSENEGSSRRTRTKGSDLTIRESSNDLEVTQKYKHLWVQCENCYGLNYKKFLKSKMNICEQCGYHLKMSSSDRIELLIDPGTWDPMDEDMVSLDPIEFHSEEEPYKDRIDSYQRKTGLTEAVQTGIGQLNGIPVAIGVMDFQFMGGSMGSVVGEKITRLIEHAANQNLPLIIVCASGGARMQEGSLSLMQMAKISSALYDYQLNKKLFYVSILTSPTTGGVTASFGMLGDIIIAEPNAYIAFAGKRVIEQTLNKTVPEGSQAAEYLFQKGLFDLIVPRNLLKSVLSELFKLHAFFPLNQKSSKIK.

The tract at residues 184–203 (LNSSENEGSSRRTRTKGSDL) is disordered. The CoA carboxyltransferase N-terminal domain occupies 221–490 (LWVQCENCYG…PLNQKSSKIK (270 aa)). Residues Cys225, Cys228, Cys244, and Cys247 each contribute to the Zn(2+) site. The segment at 225-247 (CENCYGLNYKKFLKSKMNICEQC) adopts a C4-type zinc-finger fold.

The protein belongs to the AccD/PCCB family. In terms of assembly, acetyl-CoA carboxylase is a heterohexamer composed of biotin carboxyl carrier protein, biotin carboxylase and 2 subunits each of ACCase subunit alpha and ACCase plastid-coded subunit beta (accD). It depends on Zn(2+) as a cofactor.

Its subcellular location is the plastid. The protein localises to the chloroplast stroma. The catalysed reaction is N(6)-carboxybiotinyl-L-lysyl-[protein] + acetyl-CoA = N(6)-biotinyl-L-lysyl-[protein] + malonyl-CoA. It participates in lipid metabolism; malonyl-CoA biosynthesis; malonyl-CoA from acetyl-CoA: step 1/1. Its function is as follows. Component of the acetyl coenzyme A carboxylase (ACC) complex. Biotin carboxylase (BC) catalyzes the carboxylation of biotin on its carrier protein (BCCP) and then the CO(2) group is transferred by the transcarboxylase to acetyl-CoA to form malonyl-CoA. The chain is Acetyl-coenzyme A carboxylase carboxyl transferase subunit beta, chloroplastic from Solanum bulbocastanum (Wild potato).